A 172-amino-acid chain; its full sequence is MSRTIVALILLGLAALAAADHHEGHGAEKEWAGKAWLGKWVSTDRSENWDAFVEALGLPLAAYGGNHKTVHKLWKEGDHYHHQIIIADKSYKQDIQFKLGEEGRTAHNGTEVTFKYTEVGDNLQNEVKIPSKNKTISDSYVVKGDELEKTYKINDVVAKRWYKKHAHEPSTA.

A signal peptide spans 1–19 (MSRTIVALILLGLAALAAA). The interval 30–59 (EWAGKAWLGKWVSTDRSENWDAFVEALGLP) is SAHS-c1. An SAHS-c2 region spans residues 74 to 102 (WKEGDHYHHQIIIADKSYKQDIQFKLGEE). N-linked (GlcNAc...) asparagine glycans are attached at residues asparagine 108 and asparagine 133. Positions 115-164 (KYTEVGDNLQNEVKIPSKNKTISDSYVVKGDELEKTYKINDVVAKRWYKK) are SAHS-c3.

It belongs to the Secretory-abundant heat soluble protein (SAHS) family.

The protein localises to the secreted. Secreted heat soluble protein acting as a molecular shield in water-deficient condition. Tardigrade-specific intrinsically disordered proteins (TDPs) are essential for desiccation tolerance by forming non-crystalline amorphous solids upon desiccation, and this vitrified state mirrors their protective capabilities. In Hypsibius exemplaris (Freshwater tardigrade), this protein is Secretory-abundant heat soluble protein 64681.